A 113-amino-acid chain; its full sequence is Large ribosomal subunit protein bL17 (113 aa).

The protein belongs to the bacterial ribosomal protein bL17 family. In terms of assembly, part of the 50S ribosomal subunit. Contacts protein L32.

The protein is Large ribosomal subunit protein bL17 of Syntrophomonas wolfei subsp. wolfei (strain DSM 2245B / Goettingen).